The sequence spans 492 residues: Protein nucleotidyltransferase YdiU (492 aa).

Residues G91, G93, R94, K114, D126, G127, R180, and R187 each contribute to the ATP site. D256 acts as the Proton acceptor in catalysis. Mg(2+)-binding residues include N257 and D266. D266 is an ATP binding site.

Belongs to the SELO family. The cofactor is Mg(2+). It depends on Mn(2+) as a cofactor.

The catalysed reaction is L-seryl-[protein] + ATP = 3-O-(5'-adenylyl)-L-seryl-[protein] + diphosphate. It catalyses the reaction L-threonyl-[protein] + ATP = 3-O-(5'-adenylyl)-L-threonyl-[protein] + diphosphate. The enzyme catalyses L-tyrosyl-[protein] + ATP = O-(5'-adenylyl)-L-tyrosyl-[protein] + diphosphate. It carries out the reaction L-histidyl-[protein] + UTP = N(tele)-(5'-uridylyl)-L-histidyl-[protein] + diphosphate. The catalysed reaction is L-seryl-[protein] + UTP = O-(5'-uridylyl)-L-seryl-[protein] + diphosphate. It catalyses the reaction L-tyrosyl-[protein] + UTP = O-(5'-uridylyl)-L-tyrosyl-[protein] + diphosphate. In terms of biological role, nucleotidyltransferase involved in the post-translational modification of proteins. It can catalyze the addition of adenosine monophosphate (AMP) or uridine monophosphate (UMP) to a protein, resulting in modifications known as AMPylation and UMPylation. This is Protein nucleotidyltransferase YdiU from Synechococcus elongatus (strain ATCC 33912 / PCC 7942 / FACHB-805) (Anacystis nidulans R2).